A 611-amino-acid polypeptide reads, in one-letter code: Dihydroxy-acid dehydratase (611 aa).

Residue aspartate 82 participates in Mg(2+) binding. [2Fe-2S] cluster is bound at residue cysteine 123. Positions 124 and 125 each coordinate Mg(2+). Lysine 125 carries the N6-carboxylysine modification. Residue cysteine 192 coordinates [2Fe-2S] cluster. Mg(2+) is bound at residue glutamate 489. The Proton acceptor role is filled by serine 515. The span at glutamate 565–glycine 574 shows a compositional bias: basic and acidic residues. The tract at residues glutamate 565–glutamate 586 is disordered.

This sequence belongs to the IlvD/Edd family. As to quaternary structure, homodimer. The cofactor is [2Fe-2S] cluster. Mg(2+) is required as a cofactor.

It carries out the reaction (2R)-2,3-dihydroxy-3-methylbutanoate = 3-methyl-2-oxobutanoate + H2O. The enzyme catalyses (2R,3R)-2,3-dihydroxy-3-methylpentanoate = (S)-3-methyl-2-oxopentanoate + H2O. It functions in the pathway amino-acid biosynthesis; L-isoleucine biosynthesis; L-isoleucine from 2-oxobutanoate: step 3/4. It participates in amino-acid biosynthesis; L-valine biosynthesis; L-valine from pyruvate: step 3/4. Functions in the biosynthesis of branched-chain amino acids. Catalyzes the dehydration of (2R,3R)-2,3-dihydroxy-3-methylpentanoate (2,3-dihydroxy-3-methylvalerate) into 2-oxo-3-methylpentanoate (2-oxo-3-methylvalerate) and of (2R)-2,3-dihydroxy-3-methylbutanoate (2,3-dihydroxyisovalerate) into 2-oxo-3-methylbutanoate (2-oxoisovalerate), the penultimate precursor to L-isoleucine and L-valine, respectively. The chain is Dihydroxy-acid dehydratase from Parabacteroides distasonis (strain ATCC 8503 / DSM 20701 / CIP 104284 / JCM 5825 / NCTC 11152).